The sequence spans 1083 residues: Solute carrier family 12 member 7 (1083 aa).

Positions 1–51 (MPTNFTVVPVEARADGAGDEAAERTEEPGSPESADPACPTPGDGNPRENSP) are disordered. The Cytoplasmic portion of the chain corresponds to 1-119 (MPTNFTVVPV…RREIKAPRMG (119 aa)). The span at 12–27 (ARADGAGDEAAERTEE) shows a compositional bias: basic and acidic residues. Phosphoserine occurs at positions 30, 33, 50, and 62. The chain crosses the membrane as a discontinuously helical span at residues 120–142 (TFIGVYLPCLQNILGVILFLRLT). K(+)-binding residues include asparagine 131 and isoleucine 132. Residue valine 135 coordinates chloride. Residues 143–149 (WIVGAAG) are Extracellular-facing. The chain crosses the membrane as a helical span at residues 150-172 (VLESFLIVAMCCTCTMLTAISMS). At 173-196 (AIATNGVVPAGGSYYMISRSLGPE) the chain is on the cytoplasmic side. Residues 197-225 (FGGAVGLCFYLGTTFAGAMYILGTIEIFL) traverse the membrane as a helical segment. Over 226-249 (TYISPSAAIFQAETADGEAAALLN) the chain is Extracellular. Transmembrane regions (helical) follow at residues 250–271 (NMRVYGSCALALMAVVVFVGVK) and 272–300 (YVNKLALVFLACVVLSILAIYAGVIKTAF). The Extracellular portion of the chain corresponds to 301 to 419 (APPDIPVCLL…PYVLTDIMTY (119 aa)). Residues asparagine 312, asparagine 331, and asparagine 360 are each glycosylated (N-linked (GlcNAc...) asparagine). Residues 420-440 (FTMLVGIYFPSVTGIMAGSNR) form a helical membrane-spanning segment. K(+)-binding residues include proline 429 and threonine 432. Residue proline 429 participates in chloride binding. Positions 433 and 434 each coordinate chloride. Over 441–450 (SGDLKDAQKS) the chain is Cytoplasmic. The chain crosses the membrane as a helical span at residues 451-473 (IPTGTILAIVTTSFIYLSCIVLF). The Extracellular portion of the chain corresponds to 474–504 (GACIEGVVLRDKFGEALQGNLVIGMLAWPSP). The chain crosses the membrane as a helical span at residues 505-531 (WVIVIGSFFSTCGAGLQSLTGAPRLLQ). The Cytoplasmic segment spans residues 532 to 554 (AIARDGIIPFLQVFGHGKANGEP). Transmembrane regions (helical) follow at residues 555–573 (TWALLLTALICETGILIAS) and 574–598 (LDSVAPILSMFFLMCYMFVNLACAV). Tyrosine 589 contacts chloride. Over 599–612 (QTLLRTPNWRPRFK) the chain is Cytoplasmic. 2 helical membrane-spanning segments follow: residues 613–635 (FYHWTLSFLGMSLCLALMFICSW) and 636–651 (YYALFAMLIAGCIYKY). Residues 652-1083 (IEYRGAEKEW…GGREVITIYS (432 aa)) are Cytoplasmic-facing. The segment at 664–680 (GIRGLSLNAARYALLRV) is scissor helix. A phosphothreonine mark is found at threonine 973 and threonine 980.

This sequence belongs to the SLC12A transporter family. K/Cl co-transporter subfamily. In terms of assembly, homodimer; adopts a domain-swap conformation at the scissor helices connecting the transmembrane domain and C-terminal domain. Heterodimer with K-Cl cotransporter SLC12A5. As to expression, widely expressed with highest levels in kidney, liver and pancreas. Expressed in choroid plexus and suprachiasmatic nucleus.

It is found in the cell membrane. The enzyme catalyses K(+)(in) + chloride(in) = K(+)(out) + chloride(out). Activated by N-ethylmaleimide (NEM). Inhibited by furosemide, DIDS and bumetanide. The inhibition is much stronger in the presence of 50 mM K(+) in the uptake medium. Inhibited by DIOA. Inhibited by WNK3. Functionally, mediates electroneutral potassium-chloride cotransport when activated by cell swelling. May mediate K(+) uptake into Deiters' cells in the cochlea and contribute to K(+) recycling in the inner ear. Important for the survival of cochlear outer and inner hair cells and the maintenance of the organ of Corti. May be required for basolateral Cl(-) extrusion in the kidney and contribute to renal acidification. This chain is Solute carrier family 12 member 7, found in Rattus norvegicus (Rat).